Reading from the N-terminus, the 615-residue chain is Membrane protein insertase YidC (615 aa).

5 consecutive transmembrane segments (helical) span residues 9 to 29 (LMFI…VLGP), 384 to 404 (LVGN…LVLY), 458 to 478 (LPML…TVTI), 516 to 536 (LIGA…FTMW), and 556 to 576 (WFPV…VIYW).

The protein belongs to the OXA1/ALB3/YidC family. Type 1 subfamily. In terms of assembly, interacts with the Sec translocase complex via SecD. Specifically interacts with transmembrane segments of nascent integral membrane proteins during membrane integration.

It localises to the cell inner membrane. Functionally, required for the insertion and/or proper folding and/or complex formation of integral membrane proteins into the membrane. Involved in integration of membrane proteins that insert both dependently and independently of the Sec translocase complex, as well as at least some lipoproteins. Aids folding of multispanning membrane proteins. This chain is Membrane protein insertase YidC, found in Caulobacter vibrioides (strain ATCC 19089 / CIP 103742 / CB 15) (Caulobacter crescentus).